Here is a 451-residue protein sequence, read N- to C-terminus: F-box/kelch-repeat protein At1g74510 (451 aa).

Residues 93-139 (SSPVTRLDQNALLNCLAHCSLSDFGSIASTNRTFRSLIKDSELYRLR) form the F-box domain. Kelch repeat units follow at residues 137-188 (RLRR…KESL), 193-236 (ELLV…SLGE), 237-284 (IAVI…FMDG), 286-333 (FYCI…DQAK), and 349-395 (AVVK…GMAF).

The sequence is that of F-box/kelch-repeat protein At1g74510 from Arabidopsis thaliana (Mouse-ear cress).